Here is a 433-residue protein sequence, read N- to C-terminus: Acetylcholine receptor-like protein cup-4 (433 aa).

The first 24 residues, 1 to 24, serve as a signal peptide directing secretion; the sequence is MKIIIFVCFILIFYLPIQKKHVNS. N-linked (GlcNAc...) asparagine glycans are attached at residues asparagine 41 and asparagine 68. Cysteines 178 and 192 form a disulfide. Asparagine 237 and asparagine 249 each carry an N-linked (GlcNAc...) asparagine glycan. 4 helical membrane-spanning segments follow: residues 282 to 302, 307 to 327, 337 to 357, and 413 to 433; these read EAAV…TFFI, STFL…HDLV, IPFC…TLVL, and PIIG…CLLL.

The protein belongs to the ligand-gated ion channel (TC 1.A.9) family. Acetylcholine receptor (TC 1.A.9.1) subfamily. In terms of tissue distribution, expressed in coelomocytes.

It localises to the cytoplasmic vesicle membrane. Functionally, thought to regulate endocytosis in coelomocytes through modulation of phospholipase C activity. Possible acetylcholine receptor. This chain is Acetylcholine receptor-like protein cup-4 (cup-4), found in Caenorhabditis elegans.